We begin with the raw amino-acid sequence, 204 residues long: UPF0637 protein LMHCC_1566 (204 aa).

It belongs to the UPF0637 family.

The sequence is that of UPF0637 protein LMHCC_1566 from Listeria monocytogenes serotype 4a (strain HCC23).